The primary structure comprises 332 residues: Succinylglutamate desuccinylase (332 aa).

Residues histidine 59, glutamate 62, and histidine 151 each contribute to the Zn(2+) site. The active site involves glutamate 215.

It belongs to the AspA/AstE family. Succinylglutamate desuccinylase subfamily. It depends on Zn(2+) as a cofactor.

The catalysed reaction is N-succinyl-L-glutamate + H2O = L-glutamate + succinate. Its pathway is amino-acid degradation; L-arginine degradation via AST pathway; L-glutamate and succinate from L-arginine: step 5/5. In terms of biological role, transforms N(2)-succinylglutamate into succinate and glutamate. In Pseudomonas aeruginosa (strain LESB58), this protein is Succinylglutamate desuccinylase.